The following is a 562-amino-acid chain: NAD-dependent malic enzyme (562 aa).

Tyr101 (proton donor) is an active-site residue. Arg154 contacts NAD(+). Lys172 (proton acceptor) is an active-site residue. A divalent metal cation-binding residues include Glu243, Asp244, and Asp267. NAD(+) contacts are provided by Asp267 and Asn415.

Belongs to the malic enzymes family. As to quaternary structure, homotetramer. The cofactor is Mg(2+). It depends on Mn(2+) as a cofactor.

The catalysed reaction is (S)-malate + NAD(+) = pyruvate + CO2 + NADH. It carries out the reaction oxaloacetate + H(+) = pyruvate + CO2. This chain is NAD-dependent malic enzyme, found in Shewanella woodyi (strain ATCC 51908 / MS32).